Reading from the N-terminus, the 202-residue chain is uncharacterized protein (202 aa).

K136 participates in a covalent cross-link: Isoglutamyl lysine isopeptide (Lys-Gln) (interchain with Q-Cter in protein Pup).

This is an uncharacterized protein from Mycobacterium tuberculosis (strain CDC 1551 / Oshkosh).